The primary structure comprises 163 residues: Choriogonadotropin subunit beta (163 aa).

A signal peptide spans 1–20 (MEMLQGLLLCLLLSTGGAWA). Intrachain disulfides connect Cys-29–Cys-76, Cys-43–Cys-91, Cys-46–Cys-129, Cys-54–Cys-107, Cys-58–Cys-109, and Cys-112–Cys-119. Residue Asn-50 is glycosylated (N-linked (GlcNAc...) asparagine). Asn-124 carries N-linked (GlcNAc...) asparagine glycosylation. Polar residues predominate over residues 135 to 151 (QDSSSNVPPSNLTSPSQ). Positions 135–163 (QDSSSNVPPSNLTSPSQLLEPAVTPLVPQ) are disordered. An O-linked (GalNAc...) serine glycan is attached at Ser-139. N-linked (GlcNAc...) asparagine glycosylation is present at Asn-145. Ser-150 carries an O-linked (GalNAc...) serine glycan.

The protein belongs to the glycoprotein hormones subunit beta family. Heterodimer of a common alpha chain and a unique beta chain which confers biological specificity to thyrotropin, lutropin, follitropin and gonadotropin.

Its subcellular location is the secreted. Its function is as follows. Stimulates the ovaries to synthesize the steroids that are essential for the maintenance of pregnancy. This is Choriogonadotropin subunit beta (CGB) from Saimiri boliviensis boliviensis (Bolivian squirrel monkey).